Here is a 456-residue protein sequence, read N- to C-terminus: tRNA-2-methylthio-N(6)-dimethylallyladenosine synthase (456 aa).

The MTTase N-terminal domain occupies Lys-19 to Val-137. 6 residues coordinate [4Fe-4S] cluster: Cys-28, Cys-64, Cys-98, Cys-174, Cys-178, and Cys-181. The 233-residue stretch at Arg-160–Asn-392 folds into the Radical SAM core domain. A TRAM domain is found at Lys-393 to Glu-456.

It belongs to the methylthiotransferase family. MiaB subfamily. In terms of assembly, monomer. [4Fe-4S] cluster is required as a cofactor.

It is found in the cytoplasm. The catalysed reaction is N(6)-dimethylallyladenosine(37) in tRNA + (sulfur carrier)-SH + AH2 + 2 S-adenosyl-L-methionine = 2-methylsulfanyl-N(6)-dimethylallyladenosine(37) in tRNA + (sulfur carrier)-H + 5'-deoxyadenosine + L-methionine + A + S-adenosyl-L-homocysteine + 2 H(+). Its function is as follows. Catalyzes the methylthiolation of N6-(dimethylallyl)adenosine (i(6)A), leading to the formation of 2-methylthio-N6-(dimethylallyl)adenosine (ms(2)i(6)A) at position 37 in tRNAs that read codons beginning with uridine. In Clostridium botulinum (strain Eklund 17B / Type B), this protein is tRNA-2-methylthio-N(6)-dimethylallyladenosine synthase.